Consider the following 501-residue polypeptide: Splicing factor ESS-2 homolog (501 aa).

2 stretches are compositionally biased toward low complexity: residues 1-18 (MSAT…GTPG) and 105-115 (ISGTGRSTSRR). Disordered stretches follow at residues 1–20 (MSAT…PGSL) and 105–163 (ISGT…GRDT). The segment covering 126 to 151 (TPVSQAKCSNTPLPNSRATDTPFSTD) has biased composition (polar residues). Residues 152 to 163 (GSEKSDAEGRDT) are compositionally biased toward basic and acidic residues. Phosphoserine is present on residues Ser-409 and Ser-411. The disordered stretch occupies residues 425–471 (RGTPRLRHTPSPMSGRKRKVTPGVVRSTNTPILGEPKPKQQAKISTP).

It belongs to the ESS2 family.

It is found in the nucleus. This is Splicing factor ESS-2 homolog (Es2) from Drosophila melanogaster (Fruit fly).